The sequence spans 154 residues: NAD(P)H-quinone oxidoreductase subunit N (154 aa).

This sequence belongs to the complex I NdhN subunit family. In terms of assembly, NDH-1 can be composed of about 15 different subunits; different subcomplexes with different compositions have been identified which probably have different functions.

It is found in the cellular thylakoid membrane. The catalysed reaction is a plastoquinone + NADH + (n+1) H(+)(in) = a plastoquinol + NAD(+) + n H(+)(out). It carries out the reaction a plastoquinone + NADPH + (n+1) H(+)(in) = a plastoquinol + NADP(+) + n H(+)(out). NDH-1 shuttles electrons from an unknown electron donor, via FMN and iron-sulfur (Fe-S) centers, to quinones in the respiratory and/or the photosynthetic chain. The immediate electron acceptor for the enzyme in this species is believed to be plastoquinone. Couples the redox reaction to proton translocation, and thus conserves the redox energy in a proton gradient. Cyanobacterial NDH-1 also plays a role in inorganic carbon-concentration. This is NAD(P)H-quinone oxidoreductase subunit N from Prochlorococcus marinus (strain NATL2A).